The chain runs to 38 residues: Photosystem II reaction center protein M (38 aa).

A helical transmembrane segment spans residues glycine 7 to isoleucine 27.

It belongs to the PsbM family. In terms of assembly, PSII is composed of 1 copy each of membrane proteins PsbA, PsbB, PsbC, PsbD, PsbE, PsbF, PsbH, PsbI, PsbJ, PsbK, PsbL, PsbM, PsbT, PsbX, PsbY, PsbZ, Psb30/Ycf12, peripheral proteins PsbO, CyanoQ (PsbQ), PsbU, PsbV and a large number of cofactors. It forms dimeric complexes.

Its subcellular location is the cellular thylakoid membrane. One of the components of the core complex of photosystem II (PSII). PSII is a light-driven water:plastoquinone oxidoreductase that uses light energy to abstract electrons from H(2)O, generating O(2) and a proton gradient subsequently used for ATP formation. It consists of a core antenna complex that captures photons, and an electron transfer chain that converts photonic excitation into a charge separation. This subunit is found at the monomer-monomer interface. The sequence is that of Photosystem II reaction center protein M from Nostoc punctiforme (strain ATCC 29133 / PCC 73102).